A 433-amino-acid chain; its full sequence is 23S rRNA (uracil(1939)-C(5))-methyltransferase RlmD (433 aa).

The 59-residue stretch at 10–68 folds into the TRAM domain; sequence RTTTRQIITVSVNDLDSFGQGVARHNGKTLFIPGLLPQENAEVTVTEDKKQYARAKVVR. [4Fe-4S] cluster contacts are provided by Cys-81, Cys-87, Cys-90, and Cys-162. Residues Gln-265, Phe-294, Asn-299, Glu-315, Asn-342, and Asp-363 each coordinate S-adenosyl-L-methionine. The Nucleophile role is filled by Cys-389.

It belongs to the class I-like SAM-binding methyltransferase superfamily. RNA M5U methyltransferase family. RlmD subfamily.

The enzyme catalyses uridine(1939) in 23S rRNA + S-adenosyl-L-methionine = 5-methyluridine(1939) in 23S rRNA + S-adenosyl-L-homocysteine + H(+). Catalyzes the formation of 5-methyl-uridine at position 1939 (m5U1939) in 23S rRNA. The protein is 23S rRNA (uracil(1939)-C(5))-methyltransferase RlmD of Shigella boydii serotype 4 (strain Sb227).